The primary structure comprises 70 residues: Large ribosomal subunit protein uL29 (70 aa).

The protein belongs to the universal ribosomal protein uL29 family.

The chain is Large ribosomal subunit protein uL29 from Prochlorococcus marinus (strain MIT 9313).